The sequence spans 355 residues: S-adenosylmethionine:tRNA ribosyltransferase-isomerase (355 aa).

The protein belongs to the QueA family. Monomer.

The protein resides in the cytoplasm. It catalyses the reaction 7-aminomethyl-7-carbaguanosine(34) in tRNA + S-adenosyl-L-methionine = epoxyqueuosine(34) in tRNA + adenine + L-methionine + 2 H(+). Its pathway is tRNA modification; tRNA-queuosine biosynthesis. Its function is as follows. Transfers and isomerizes the ribose moiety from AdoMet to the 7-aminomethyl group of 7-deazaguanine (preQ1-tRNA) to give epoxyqueuosine (oQ-tRNA). This Jannaschia sp. (strain CCS1) protein is S-adenosylmethionine:tRNA ribosyltransferase-isomerase.